A 702-amino-acid polypeptide reads, in one-letter code: MADS-box MEF2 type transcription factor MIG1 (702 aa).

Residues 1–61 form the MADS-box domain; it reads MGRRKIEIKA…KKLYEYSSGD (61 aa). Disordered stretches follow at residues 73-608 and 658-702; these read GGAT…NIDT and PSFL…KVDS. Residues 86-96 are compositionally biased toward acidic residues; the sequence is GGDDDDEEEGD. Positions 132–144 are enriched in pro residues; it reads ASPPIPNGVPFPP. Residues 145-155 are compositionally biased toward low complexity; sequence HGHGVPRGHTP. Positions 180-195 are enriched in polar residues; the sequence is GSPQVNGFGFGQQQSM. Over residues 201–241 the composition is skewed to pro residues; that stretch reads TTMPPHMPPQMAPGPPFPYPQHPQHPPHPPHPPHPPHPQQP. Low complexity-rich tracts occupy residues 273-284, 326-343, and 350-371; these read PMGMQRHSVSPP, ESPQ…QQPE, and EQQQ…QSEP. The segment covering 456 to 465 has biased composition (polar residues); it reads VDESTSNASE. Low complexity-rich tracts occupy residues 487–512 and 530–553; these read RASI…SLRA and DGSG…DATS. Positions 554 to 567 are enriched in polar residues; sequence QSTRQNDSHSSTNM. The segment covering 587–600 has biased composition (pro residues); it reads PPNPFAPKRPPQHP. Residues 693-702 show a composition bias toward basic and acidic residues; the sequence is NEPKRVKVDS.

This sequence belongs to the MEF2 family. As to quaternary structure, interacts with MAPK MPS1.

The protein localises to the nucleus. In terms of biological role, transcription factor acting downstream of the MPS1 MAP kinase (MAPK) cascade during conidiation and plant infection. Required for overcoming plant defense responses and the differentiation of secondary infectious hyphae in live plant cells. In Pyricularia oryzae (strain 70-15 / ATCC MYA-4617 / FGSC 8958) (Rice blast fungus), this protein is MADS-box MEF2 type transcription factor MIG1.